A 99-amino-acid polypeptide reads, in one-letter code: Beta-defensin 127 (99 aa).

A signal peptide spans 1-20 (MGLFMIIAILLFQKPTVTEQ). 3 cysteine pairs are disulfide-bonded: C24/C53, C33/C47, and C37/C54. Residues 66 to 99 (ITKPSHPKPATLALTLQDYVTIIENFPSLKTQST) constitute a propeptide that is removed on maturation.

This sequence belongs to the beta-defensin family.

The protein localises to the secreted. In terms of biological role, has antibacterial activity. This chain is Beta-defensin 127 (DEFB127), found in Pan troglodytes (Chimpanzee).